Consider the following 313-residue polypeptide: Porphobilinogen deaminase (313 aa).

Cys-242 is modified (S-(dipyrrolylmethanemethyl)cysteine).

Belongs to the HMBS family. In terms of assembly, monomer. It depends on dipyrromethane as a cofactor.

The enzyme catalyses 4 porphobilinogen + H2O = hydroxymethylbilane + 4 NH4(+). It functions in the pathway porphyrin-containing compound metabolism; protoporphyrin-IX biosynthesis; coproporphyrinogen-III from 5-aminolevulinate: step 2/4. In terms of biological role, tetrapolymerization of the monopyrrole PBG into the hydroxymethylbilane pre-uroporphyrinogen in several discrete steps. In Yersinia pseudotuberculosis serotype IB (strain PB1/+), this protein is Porphobilinogen deaminase.